A 399-amino-acid polypeptide reads, in one-letter code: CCA-adding enzyme (399 aa).

The ATP site is built by glycine 32 and arginine 35. Residues glycine 32 and arginine 35 each contribute to the CTP site. Residues aspartate 45 and aspartate 47 each contribute to the Mg(2+) site. The ATP site is built by arginine 116, aspartate 159, arginine 162, arginine 165, and arginine 168. 5 residues coordinate CTP: arginine 116, aspartate 159, arginine 162, arginine 165, and arginine 168.

The protein belongs to the tRNA nucleotidyltransferase/poly(A) polymerase family. Bacterial CCA-adding enzyme type 3 subfamily. In terms of assembly, homodimer. The cofactor is Mg(2+).

The catalysed reaction is a tRNA precursor + 2 CTP + ATP = a tRNA with a 3' CCA end + 3 diphosphate. It catalyses the reaction a tRNA with a 3' CCA end + 2 CTP + ATP = a tRNA with a 3' CCACCA end + 3 diphosphate. Its function is as follows. Catalyzes the addition and repair of the essential 3'-terminal CCA sequence in tRNAs without using a nucleic acid template. Adds these three nucleotides in the order of C, C, and A to the tRNA nucleotide-73, using CTP and ATP as substrates and producing inorganic pyrophosphate. tRNA 3'-terminal CCA addition is required both for tRNA processing and repair. Also involved in tRNA surveillance by mediating tandem CCA addition to generate a CCACCA at the 3' terminus of unstable tRNAs. While stable tRNAs receive only 3'-terminal CCA, unstable tRNAs are marked with CCACCA and rapidly degraded. The protein is CCA-adding enzyme of Streptococcus pneumoniae (strain CGSP14).